The sequence spans 218 residues: Large ribosomal subunit protein uL3 (218 aa).

Residues 126-170 form a disordered region; it reads HGFSRGPMSHGSKNHREPGSTGAGTTPGRIYPGKRMAGRYGGKKR.

This sequence belongs to the universal ribosomal protein uL3 family. Part of the 50S ribosomal subunit. Forms a cluster with proteins L14 and L19.

Its function is as follows. One of the primary rRNA binding proteins, it binds directly near the 3'-end of the 23S rRNA, where it nucleates assembly of the 50S subunit. This chain is Large ribosomal subunit protein uL3, found in Prochlorococcus marinus (strain MIT 9313).